The following is a 318-amino-acid chain: Ubiquitin-like domain-containing CTD phosphatase 1 (318 aa).

Residues 3–81 (LSLIIKWGGQ…IMMMGTREES (79 aa)) form the Ubiquitin-like domain. The region spanning 133–294 (PREGKKLLVL…VKLSQYLKEI (162 aa)) is the FCP1 homology domain. Asp143, Asp145, and Asp253 together coordinate Mg(2+).

The cofactor is Mg(2+).

It is found in the nucleus. The enzyme catalyses O-phospho-L-seryl-[protein] + H2O = L-seryl-[protein] + phosphate. It catalyses the reaction O-phospho-L-threonyl-[protein] + H2O = L-threonyl-[protein] + phosphate. In terms of biological role, dephosphorylates 26S nuclear proteasomes, thereby decreasing their proteolytic activity. Recruited to the 19S regulatory particle of the 26S proteasome where it dephosphorylates 19S component psmc2 which impairs psmc2 ATPase activity and disrupts 26S proteasome assembly. Has also been reported to stimulate the proteolytic activity of the 26S proteasome. The polypeptide is Ubiquitin-like domain-containing CTD phosphatase 1 (ublcp1) (Xenopus laevis (African clawed frog)).